Reading from the N-terminus, the 315-residue chain is Acetyl-coenzyme A carboxylase carboxyl transferase subunit alpha (315 aa).

Positions 32-293 (NISDEIARLQ…RADLVQQLDM (262 aa)) constitute a CoA carboxyltransferase C-terminal domain.

Belongs to the AccA family. As to quaternary structure, acetyl-CoA carboxylase is a heterohexamer composed of biotin carboxyl carrier protein (AccB), biotin carboxylase (AccC) and two subunits each of ACCase subunit alpha (AccA) and ACCase subunit beta (AccD).

It is found in the cytoplasm. It catalyses the reaction N(6)-carboxybiotinyl-L-lysyl-[protein] + acetyl-CoA = N(6)-biotinyl-L-lysyl-[protein] + malonyl-CoA. It functions in the pathway lipid metabolism; malonyl-CoA biosynthesis; malonyl-CoA from acetyl-CoA: step 1/1. Its function is as follows. Component of the acetyl coenzyme A carboxylase (ACC) complex. First, biotin carboxylase catalyzes the carboxylation of biotin on its carrier protein (BCCP) and then the CO(2) group is transferred by the carboxyltransferase to acetyl-CoA to form malonyl-CoA. This Pseudomonas putida (strain ATCC 47054 / DSM 6125 / CFBP 8728 / NCIMB 11950 / KT2440) protein is Acetyl-coenzyme A carboxylase carboxyl transferase subunit alpha.